The sequence spans 104 residues: Phosphate metabolism protein 6 (104 aa).

The chain crosses the membrane as a helical span at residues Ile76 to Val96.

It is found in the vacuole membrane. This Saccharomyces cerevisiae (strain ATCC 204508 / S288c) (Baker's yeast) protein is Phosphate metabolism protein 6 (PHM6).